Consider the following 251-residue polypeptide: 14-3-3-like protein (251 aa).

This sequence belongs to the 14-3-3 family.

The protein is 14-3-3-like protein of Fucus vesiculosus (Bladder wrack).